Here is a 146-residue protein sequence, read N- to C-terminus: MKFSLLSAIAAAVFVPFTSATPLASTTDLSYDTHYDDPSLALSGVTCSDGDNGMITKGYNTAGEIPNYPHVGGAFTVETWNSPNCGKCYKVTYNAKTIFLTAIDHSNSGFNIAKKSMDVLTNGRAEELGRIKVTYEEVASSLCGLK.

Positions 1–20 (MKFSLLSAIAAAVFVPFTSA) are cleaved as a signal peptide.

It belongs to the cerato-platanin family. In terms of processing, glycosylated.

The protein resides in the secreted. The protein is Heat-stable 19 kDa antigen (CSA) of Coccidioides immitis (strain RS) (Valley fever fungus).